Consider the following 1928-residue polypeptide: Myosin-1 (1928 aa).

In terms of domain architecture, Myosin N-terminal SH3-like spans 8–71; that stretch reads SSNMIVWIPD…RISDVFPVNP (64 aa). A Myosin motor domain is found at 75-791; sequence DKVENMSELT…VLADLEKQKD (717 aa). An ATP-binding site is contributed by 180-187; the sequence is GESGAGKT. An actin-binding region spans residues 460-529; that stretch reads IGLLDIAGFE…LQLTIDLIES (70 aa). Positions 629–641 are enriched in polar residues; sequence SSSAGVEANISNQ. The tract at residues 629–657 is disordered; that stretch reads SSSAGVEANISNQEVKKSARTSTFKTTSS. One can recognise an IQ domain in the interval 794 to 823; it reads LNNIMIKLTATIRGYTVRKEITYHLQKLKK. Positions 856 to 1911 form a coiled coil; it reads SSNDMTRTKK…FWKSRYESTM (1056 aa).

It belongs to the TRAFAC class myosin-kinesin ATPase superfamily. Myosin family.

In terms of biological role, required for cell division. The sequence is that of Myosin-1 (MYO1) from Saccharomyces cerevisiae (strain ATCC 204508 / S288c) (Baker's yeast).